Consider the following 778-residue polypeptide: MNKKILETLEFDKVKALFEPHLLTEQGLEQLRQLAPTAKADKIKQAFAEMKEMQALFVEQPHFTILSTKEIAGVCKRLEMGADLNIEEFLLLKRVLLTSRELQSFYANLENVSLEELAFWFEKLHDFPQLQGNLQAFNDAGFIENFASEELARIRRKIHDSESQVRDVLQDLLKQKAQMLTEGIVASRNGRQVLPVKNTYRNKIAGVVHDISASGNTVYIEPREVVKLSEEIASLRADERYEMLRILQEISERVRPHAAEIANDAWIIGHLDLIRAKVRFIQERQAVVPQLSENQEIQLLHVCHPLVKNAVANDVYFGQDLTAIVITGPNTGGKTIMLKTLGLTQVMAQSGLPILADKGSRVGIFEEIFADIGDEQSIEQSLSTFSSHMTNIVDILGKVNQHSLLLLDELGAGTDPQEGAALAMAILEDLRLRQIKTMATTHYPELKAYGIETAFVQNASMEFDTATLRPTYRFMQGVPGRSNAFEIAKRLGLSEVIVGDASQQIDQDNDVNRIIEQLEEQTLESRKRLDNIREVEQENLKMNRALKKLYNELNREKETELNKAREQAAEIVDMALSESDQILKNLHSKSQLKPHEIIEAKAKLKKLAPEKVDLSKNKVLQKAKKKRAPKVGDDIVVLSYGQRGTLTSQLKDGRWEAQVGLIKMTLEEKEFDLVQAQQEKAVKKKQVNVVKRTSGRGPQARLDLRGKRYEEAMNELDTFIDQALLNNMAQVDIIHGIGTGVIREGVTKYLQRNKHVKSFGYAPQNAGGSGATIVTFKG.

Residue 328–335 (GPNTGGKT) participates in ATP binding. Positions 702-777 (LDLRGKRYEE…GSGATIVTFK (76 aa)) constitute a Smr domain.

This sequence belongs to the DNA mismatch repair MutS family. MutS2 subfamily. As to quaternary structure, homodimer. Binds to stalled ribosomes, contacting rRNA.

Its function is as follows. Endonuclease that is involved in the suppression of homologous recombination and thus may have a key role in the control of bacterial genetic diversity. Acts as a ribosome collision sensor, splitting the ribosome into its 2 subunits. Detects stalled/collided 70S ribosomes which it binds and splits by an ATP-hydrolysis driven conformational change. Acts upstream of the ribosome quality control system (RQC), a ribosome-associated complex that mediates the extraction of incompletely synthesized nascent chains from stalled ribosomes and their subsequent degradation. Probably generates substrates for RQC. The polypeptide is Endonuclease MutS2 (Streptococcus pneumoniae (strain Hungary19A-6)).